The following is a 118-amino-acid chain: Ribonuclease P protein component (118 aa).

This sequence belongs to the RnpA family. In terms of assembly, consists of a catalytic RNA component (M1 or rnpB) and a protein subunit.

The enzyme catalyses Endonucleolytic cleavage of RNA, removing 5'-extranucleotides from tRNA precursor.. RNaseP catalyzes the removal of the 5'-leader sequence from pre-tRNA to produce the mature 5'-terminus. It can also cleave other RNA substrates such as 4.5S RNA. The protein component plays an auxiliary but essential role in vivo by binding to the 5'-leader sequence and broadening the substrate specificity of the ribozyme. This is Ribonuclease P protein component from Rickettsia rickettsii (strain Iowa).